We begin with the raw amino-acid sequence, 542 residues long: MGNSKPLPTISCISVFALYFSFYTITLTSSTSLQDDFIKCLYRNTNVRFTLDKTFFTPERNASIFTEVLESTAQNQRYLTKTMPKPGFIFKPVHESHVQASVICSKKLEIHFRVRSGGHDYEGVSYVSQIEKPFVLIDLSKLRQINVDIKDTSAWVEAGATVGELYYRIAEKSKFHGFPAGVYPSLGIGGHITGGAYGSLMRKYGLAADNVLDAKIVDANGKLLDRASMGEDLFWAIRGGSGGSFGIILSWKIKLVPVPETLTVFTVTKTFEQDRSFKILSKWQEIADNLVDELFLRVFFTVSGNKANKTVTMAYIGQFLGEKGTLMEVMKKDFPELGLTQKDCIEMSWIDSIIYNSGFPTNPPPPIEILLQAKSPIGKVYFKGKSDFAKKPIPVLGLEGMFKKLLEEDAALVIWTPYGGKMDKIPESEIPFPHRNGTNFMIQYYRSWSDSEKRPNRRTKWIRELYGYMTPYVSSNPRQAYVNYRDLDLGQNKDNSKSNFIEAKIWGANYFKDNFNRLVRIKSKVDPDNFFRHEQSIPTLPV.

Positions 1-30 are cleaved as a signal peptide; the sequence is MGNSKPLPTISCISVFALYFSFYTITLTSS. Residues cysteine 40 and cysteine 104 are joined by a disulfide bond. N-linked (GlcNAc...) asparagine glycosylation occurs at asparagine 61. An FAD-binding PCMH-type domain is found at 82–258; it reads TMPKPGFIFK…LSWKIKLVPV (177 aa). Histidine 119 carries the post-translational modification Pros-8alpha-FAD histidine. 2 N-linked (GlcNAc...) asparagine glycosylation sites follow: asparagine 308 and asparagine 436.

It belongs to the oxygen-dependent FAD-linked oxidoreductase family. FAD is required as a cofactor.

The protein localises to the secreted. Its subcellular location is the cell wall. The chain is Berberine bridge enzyme-like 25 from Arabidopsis thaliana (Mouse-ear cress).